Here is a 193-residue protein sequence, read N- to C-terminus: Oleosin S1-2 (193 aa).

Position 2 is an N-acetylalanine (A2). The segment at 2 to 39 (ADVRTHAHQVQVHPLRQHEGGIKVVYPQSGPSSTQVLA) is polar. Transmembrane regions (helical) follow at residues 37–57 (VLAVVAGVPVGGTLLTLAGLT), 66–86 (ILAFPLFLIFSPVIVPAAFVI), and 87–107 (GLAMTGFMASGAIGLTGLSSM). Residues 40 to 113 (VVAGVPVGGT…LSSMSWVLNH (74 aa)) are hydrophobic. Residues 139–193 (AGQRTKDAGQTIEDKAHDVRESKTYDVRDRDTKGHTASGGDRDTKTTREVRVATT) form a disordered region. Basic and acidic residues predominate over residues 142-193 (RTKDAGQTIEDKAHDVRESKTYDVRDRDTKGHTASGGDRDTKTTREVRVATT).

Belongs to the oleosin family.

It localises to the lipid droplet. It is found in the membrane. Its function is as follows. May have a structural role to stabilize the lipid body during desiccation of the seed by preventing coalescence of the oil. Probably interacts with both lipid and phospholipid moieties of lipid bodies. May also provide recognition signals for specific lipase anchorage in lipolysis during seedling growth. This is Oleosin S1-2 (S1) from Brassica napus (Rape).